A 309-amino-acid chain; its full sequence is Protein FdhE (309 aa).

It belongs to the FdhE family.

It localises to the cytoplasm. Necessary for formate dehydrogenase activity. The chain is Protein FdhE from Salmonella paratyphi A (strain ATCC 9150 / SARB42).